The sequence spans 276 residues: ATP synthase subunit a (276 aa).

The next 6 membrane-spanning stretches (helical) occupy residues 47–67, 107–127, 152–172, 188–208, 226–246, and 247–267; these read WHIDSLLFSVGLGVLFLWLFY, IAPLGLTIFVWVFLMNLMDLI, DLNVTLGLALSVFVLIVFYSI, PFNHWALIPINFVLETVTLIA, LIFILIALMPWWAQFALSVPW, and AIFHILVIVLQAFIFMMLTIV.

Belongs to the ATPase A chain family. As to quaternary structure, F-type ATPases have 2 components, CF(1) - the catalytic core - and CF(0) - the membrane proton channel. CF(1) has five subunits: alpha(3), beta(3), gamma(1), delta(1), epsilon(1). CF(0) has three main subunits: a(1), b(2) and c(9-12). The alpha and beta chains form an alternating ring which encloses part of the gamma chain. CF(1) is attached to CF(0) by a central stalk formed by the gamma and epsilon chains, while a peripheral stalk is formed by the delta and b chains.

The protein resides in the cell inner membrane. In terms of biological role, key component of the proton channel; it plays a direct role in the translocation of protons across the membrane. This chain is ATP synthase subunit a, found in Shewanella halifaxensis (strain HAW-EB4).